A 384-amino-acid chain; its full sequence is Kinesin-like protein KIF25 (384 aa).

The segment at 1-20 is disordered; sequence MTWTSGQLQREKQARPGSGA. Residues 7 to 363 form the Kinesin motor domain; that stretch reads QLQREKQARP…LGFGIRARQV (357 aa). 65–72 serves as a coordination point for ATP; that stretch reads GQTGSGKS. Disordered regions lie at residues 217–256 and 362–384; these read DQACSATLPREQTEAGRAGRSRRASQGALAPQLVPGNPAG and QVQRGPARKKPPSSQTEGKRRPD.

Belongs to the TRAFAC class myosin-kinesin ATPase superfamily. Kinesin family. As to quaternary structure, homotetramer.

The protein resides in the cytoplasm. It is found in the cytoskeleton. It localises to the microtubule organizing center. Its subcellular location is the centrosome. Its function is as follows. Minus-end microtubule-dependent motor protein. Acts as a negative regulator of centrosome separation required to prevent premature centrosome separation during interphase. Required to maintain a centered nucleus to ensure that the spindle is stably oriented at the onset of mitosis. May also act as a negative regulator of amino acid starvation-induced autophagy. In Homo sapiens (Human), this protein is Kinesin-like protein KIF25.